The primary structure comprises 453 residues: Regulatory protein opaque-2 (453 aa).

The disordered stretch occupies residues 145–243 (SSVVTSDQRS…SNRESARRSR (99 aa)). Positions 146 to 175 (SVVTSDQRSQGSNNHTGGSSIRNNPVQNKL) are enriched in polar residues. Over residues 207 to 216 (PSDEDMDGEV) the composition is skewed to acidic residues. A compositionally biased stretch (basic and acidic residues) spans 224–240 (PTEERVRKKESNRESAR). Residues 225 to 288 (TEERVRKKES…NDANVDNRVL (64 aa)) form the bZIP domain. Residues 228–251 (RVRKKESNRESARRSRYRKAAHLK) are basic motif. Residues 253–274 (LEDQVAQLKAENSCLLRRIAAL) form a leucine-zipper region.

The protein belongs to the bZIP family. Interacts with the Dof zinc finger protein PBF. As to expression, seed endosperm.

The protein resides in the nucleus. Its function is as follows. Involved in the regulation of the endosperm-specific production of albumin b-32 and other zein proteins. It is a trans-acting transcriptional activator that binds to the consensus sequence 5'-GATGAYRTGR-3'. The protein is Regulatory protein opaque-2 (O2) of Zea mays (Maize).